The primary structure comprises 157 residues: 2-C-methyl-D-erythritol 2,4-cyclodiphosphate synthase (157 aa).

A divalent metal cation is bound by residues aspartate 8 and histidine 10. 4-CDP-2-C-methyl-D-erythritol 2-phosphate contacts are provided by residues aspartate 8–histidine 10 and histidine 34–serine 35. Position 42 (histidine 42) interacts with a divalent metal cation. 4-CDP-2-C-methyl-D-erythritol 2-phosphate is bound by residues aspartate 56 to glycine 58, phenylalanine 61 to aspartate 65, threonine 132 to glutamate 135, phenylalanine 139, and arginine 142.

The protein belongs to the IspF family. Homotrimer. It depends on a divalent metal cation as a cofactor.

The catalysed reaction is 4-CDP-2-C-methyl-D-erythritol 2-phosphate = 2-C-methyl-D-erythritol 2,4-cyclic diphosphate + CMP. Its pathway is isoprenoid biosynthesis; isopentenyl diphosphate biosynthesis via DXP pathway; isopentenyl diphosphate from 1-deoxy-D-xylulose 5-phosphate: step 4/6. Involved in the biosynthesis of isopentenyl diphosphate (IPP) and dimethylallyl diphosphate (DMAPP), two major building blocks of isoprenoid compounds. Catalyzes the conversion of 4-diphosphocytidyl-2-C-methyl-D-erythritol 2-phosphate (CDP-ME2P) to 2-C-methyl-D-erythritol 2,4-cyclodiphosphate (ME-CPP) with a corresponding release of cytidine 5-monophosphate (CMP). This is 2-C-methyl-D-erythritol 2,4-cyclodiphosphate synthase from Geobacter metallireducens (strain ATCC 53774 / DSM 7210 / GS-15).